The chain runs to 463 residues: Chaperone SurA (463 aa).

The N-terminal stretch at M1–A25 is a signal peptide. 2 consecutive PpiC domains span residues G174–E276 and V289–G388. 2 disordered regions span residues Q328–G348 and R432–R463. Over residues N440–A452 the composition is skewed to low complexity. Positions A453 to R463 are enriched in pro residues.

It is found in the periplasm. It catalyses the reaction [protein]-peptidylproline (omega=180) = [protein]-peptidylproline (omega=0). In terms of biological role, chaperone involved in the correct folding and assembly of outer membrane proteins. Recognizes specific patterns of aromatic residues and the orientation of their side chains, which are found more frequently in integral outer membrane proteins. May act in both early periplasmic and late outer membrane-associated steps of protein maturation. The protein is Chaperone SurA of Xanthomonas euvesicatoria pv. vesicatoria (strain 85-10) (Xanthomonas campestris pv. vesicatoria).